The sequence spans 182 residues: NADH-quinone oxidoreductase subunit B 1 (182 aa).

Residues cysteine 47, cysteine 48, cysteine 113, and cysteine 142 each contribute to the [4Fe-4S] cluster site.

This sequence belongs to the complex I 20 kDa subunit family. NDH-1 is composed of 14 different subunits. Subunits NuoB, C, D, E, F, and G constitute the peripheral sector of the complex. It depends on [4Fe-4S] cluster as a cofactor.

Its subcellular location is the cell inner membrane. The enzyme catalyses a quinone + NADH + 5 H(+)(in) = a quinol + NAD(+) + 4 H(+)(out). NDH-1 shuttles electrons from NADH, via FMN and iron-sulfur (Fe-S) centers, to quinones in the respiratory chain. Couples the redox reaction to proton translocation (for every two electrons transferred, four hydrogen ions are translocated across the cytoplasmic membrane), and thus conserves the redox energy in a proton gradient. The chain is NADH-quinone oxidoreductase subunit B 1 from Anaeromyxobacter dehalogenans (strain 2CP-C).